The following is a 208-amino-acid chain: Large ribosomal subunit protein bL25 (208 aa).

The disordered stretch occupies residues 188–208 (AVETETEEETTTGESPAQPAE).

Belongs to the bacterial ribosomal protein bL25 family. CTC subfamily. Part of the 50S ribosomal subunit; part of the 5S rRNA/L5/L18/L25 subcomplex. Contacts the 5S rRNA. Binds to the 5S rRNA independently of L5 and L18.

In terms of biological role, this is one of the proteins that binds to the 5S RNA in the ribosome where it forms part of the central protuberance. This chain is Large ribosomal subunit protein bL25, found in Moorella thermoacetica (strain ATCC 39073 / JCM 9320).